Here is a 113-residue protein sequence, read N- to C-terminus: Cytochrome c2 (113 aa).

Heme c contacts are provided by C15, C18, H19, and M92.

It belongs to the cytochrome c family. Post-translationally, binds 1 heme c group covalently per subunit.

Functionally, cytochrome c2 is found mainly in purple, non-sulfur, photosynthetic bacteria where it functions as the electron donor to the oxidized bacteriochlorophyll in the photophosphorylation pathway. However, it may also have a role in the respiratory chain and is found in some non-photosynthetic bacteria. The protein is Cytochrome c2 of Pararhodospirillum photometricum (Rhodospirillum photometricum).